The following is a 53-amino-acid chain: Photosystem II reaction center protein K (53 aa).

A propeptide spanning residues 1–16 is cleaved from the precursor; that stretch reads MFYTNVETLLNTNCFA. Residues 28–48 form a helical membrane-spanning segment; that stretch reads LVDVLPIIPLLFLLLAFVWQA.

The protein belongs to the PsbK family. As to quaternary structure, PSII is composed of 1 copy each of membrane proteins PsbA, PsbB, PsbC, PsbD, PsbE, PsbF, PsbH, PsbI, PsbJ, PsbK, PsbL, PsbM, PsbT, PsbY, PsbZ, Psb30/Ycf12, at least 3 peripheral proteins of the oxygen-evolving complex and a large number of cofactors. It forms dimeric complexes.

It localises to the plastid. Its subcellular location is the chloroplast thylakoid membrane. Functionally, one of the components of the core complex of photosystem II (PSII). PSII is a light-driven water:plastoquinone oxidoreductase that uses light energy to abstract electrons from H(2)O, generating O(2) and a proton gradient subsequently used for ATP formation. It consists of a core antenna complex that captures photons, and an electron transfer chain that converts photonic excitation into a charge separation. The protein is Photosystem II reaction center protein K of Euglena anabaena (Euglenaria anabaena).